A 794-amino-acid polypeptide reads, in one-letter code: Zinc finger and BTB domain-containing protein 17 (794 aa).

The region spanning 1 to 104 is the BTB domain; it reads MDFPQHSQRV…VASFLQMQDI (104 aa). The disordered stretch occupies residues 116–285; it reads EPSSTTGESA…QNLRSGTYGD (170 aa). The segment covering 132–142 has biased composition (basic and acidic residues); sequence GGDKRAKDEKA. Positions 203-216 are enriched in low complexity; it reads SSMAAAEAEALSES. Residues 243–252 are compositionally biased toward basic and acidic residues; the sequence is VKEEGMHLDN. Residues 254–263 are compositionally biased toward acidic residues; the sequence is EPPEENEESA. The segment at 260-299 is interaction with MYC; that stretch reads EESAGTDSGQELGMEGQNLRSGTYGDRTESKAYGSIIHKC. 13 C2H2-type zinc fingers span residues 297–319, 325–347, 353–375, 381–403, 409–431, 437–459, 465–487, 493–515, 519–543, 549–571, 577–599, 605–628, and 708–730; these read HKCE…IRIH, FSCR…EKTH, YGCE…KKRH, YRCG…QLVH, YQCD…LETH, HKCP…LKIH, LKCR…LRIH, YVCT…VRIH, KPCQ…VRQH, YVCE…IRHH, HKCS…IIIH, YLCD…KTVH, and YACD…VRIH. K388 participates in a covalent cross-link: Glycyl lysine isopeptide (Lys-Gly) (interchain with G-Cter in ubiquitin). A Glycyl lysine isopeptide (Lys-Gly) (interchain with G-Cter in ubiquitin) cross-link involves residue K472. An interaction with MYC region spans residues 628–709; sequence HQGKAGIKIL…EDPNTHILYA (82 aa). An interaction with HCFC1 region spans residues 628 to 794; it reads HQGKAGIKIL…TAPDCLPPAE (167 aa). The interval 769–794 is disordered; sequence PRDGTEGQPTLAESPPTAPDCLPPAE. The segment covering 784–794 has biased composition (pro residues); sequence PTAPDCLPPAE.

The protein belongs to the krueppel C2H2-type zinc-finger protein family. As to quaternary structure, homooligomerizes (via the BTB/POZ domain), multimerization is required for DNA binding. Binds to the C-terminal helix-loop-helix motif of MYC which inhibits ZBTB17 transactivation and growth arrest activities and renders it insoluble in the nucleus. Also interacts with HCFC1, MAGEA4 and TMPRSS11A. Interacts (via the C-terminal zinc fingers) with GFI1; the interaction results in the recruitment of MYC to the CDKN1A/p21 and CDKN1B promoters and repression of transcription. Interacts with TRAF2, interfering with the binding of UBC13 to TRAF2, and inhibiting TRAF2 E3 ligase activity. Interacts with BCL6; the interaction inhibits ZBTB17 transactivation activity on target genes involved in cell cycle arrest. Interacts with ZBTB49; this interaction blocks ZBTB17-mediated repression of RB1. Undergoes 'Lys-48'-linked polyubiquitination at Lys-388 and Lys-472 and subsequent proteasomal degradation in a TRAF2-dependent manner and upon TNFA stimulation. Found in all the embryonic and adult tissues examined.

The protein localises to the nucleus. Its function is as follows. Transcription factor that can function as an activator or repressor depending on its binding partners, and by targeting negative regulators of cell cycle progression. Has been shown to bind to the promoters of adenovirus major late protein and cyclin D1 and activate transcription. Required for early embryonic development during gastrulation. Plays a critical role in early lymphocyte development, where it is essential to prevent apoptosis in lymphoid precursors, allowing them to survive in response to IL7 and undergo proper lineage commitment. Represses RB1 transcription; this repression can be blocked by interaction with ZBTB49. The chain is Zinc finger and BTB domain-containing protein 17 (Zbtb17) from Mus musculus (Mouse).